The chain runs to 394 residues: Ceramide glucosyltransferase-A (394 aa).

The Lumenal portion of the chain corresponds to 1–10; that stretch reads MAVLDLALQG. A helical membrane pass occupies residues 11–32; the sequence is LAIFGCVLFFVLWFMHFLSIVY. At 33–195 the chain is on the cytoplasmic side; that stretch reads TRLHLNKKIS…QVYFGTSHPR (163 aa). Residue D92 is a short sequence motif, D1. Residue D144 is a short sequence motif, D2. The helical transmembrane segment at 196–215 threads the bilayer; it reads SYISANVTGFKCVTGMSCLM. Residues 216–287 lie on the Lumenal side of the membrane; that stretch reads RKEVLDQAGG…KLRINMLPAT (72 aa). Residue D236 is a short sequence motif, D3. D236 acts as the Proton acceptor in catalysis. Positions 272–276 match the (Q/R)XXRW motif; sequence RMIRW. The helical transmembrane segment at 288-304 threads the bilayer; the sequence is IICEPISECFVASLIIG. At 305–309 the chain is on the cytoplasmic side; it reads WAAHH. A helical transmembrane segment spans residues 310-328; sequence IFRWDIMVFFMCHCLAWFI. Residues 329 to 348 are Lumenal-facing; the sequence is FDYIQLRGVQGGPLNFSKLD. Residues 349–369 traverse the membrane as a helical segment; that stretch reads YAVAWFIRESMTIYIFLSALW. The Cytoplasmic portion of the chain corresponds to 370-394; the sequence is DPTISWRTGRFRLRCGGTAEEILDV.

This sequence belongs to the glycosyltransferase 2 family. As to expression, at the late gastrula stage, weakly expressed ubiquitously. As neurulation proceeds (stages 15-16), expression moves towards the dorsal structures: involuted paraxial mesoderm and neural folds. In the tailbud embryo (stage 28), expression is restricted to the notochord. At later stages (stage 35), expression remains in the notochord and also appears weakly in the cephalic region.

Its subcellular location is the golgi apparatus membrane. The enzyme catalyses an N-acylsphing-4-enine + UDP-alpha-D-glucose = a beta-D-glucosyl-(1&lt;-&gt;1')-N-acylsphing-4-enine + UDP + H(+). It carries out the reaction UDP-alpha-D-xylose + an N-acylsphing-4-enine = a beta-D-xylosyl-(1&lt;-&gt;1')-N-acylsphing-4-enine + UDP + H(+). It catalyses the reaction N-(9Z-octadecenoyl)-sphing-4-enine + UDP-alpha-D-xylose = beta-D-xylosyl-(1&lt;-&gt;1')-N-(9Z-octadecenoyl)-sphing-4-enine + UDP + H(+). It participates in lipid metabolism; sphingolipid metabolism. In terms of biological role, participates in the initial step of the glucosylceramide-based glycosphingolipid/GSL synthetic pathway at the cytosolic surface of the Golgi. Catalyzes the transfer of glucose from UDP-glucose to ceramide to produce glucosylceramide/GlcCer (such as beta-D-glucosyl-(1&lt;-&gt;1')-N-acylsphing-4-enine). Glucosylceramide is the core component of glycosphingolipids/GSLs, amphipathic molecules consisting of a ceramide lipid moiety embedded in the outer leaflet of the membrane, linked to one of hundreds of different externally oriented oligosaccharide structures. Glycosphingolipids are essential components of membrane microdomains that mediate membrane trafficking and signal transduction. They are implicated in many fundamental cellular processes, including growth, differentiation, migration, morphogenesis, cell-to-cell and cell-to-matrix interactions. Glycosphingolipids are required for convergence extension movements during early development. Catalyzes the synthesis of xylosylceramide/XylCer (such as beta-D-xylosyl-(1&lt;-&gt;1')-N-acylsphing-4-enine) using UDP-Xyl as xylose donor. This chain is Ceramide glucosyltransferase-A (ugcg-a), found in Xenopus laevis (African clawed frog).